A 48-amino-acid polypeptide reads, in one-letter code: 4-carboxymuconolactone decarboxylase (48 aa).

Belongs to the carboxymuconolactone decarboxylase family.

It carries out the reaction (R)-2-(carboxymethyl)-5-oxo-2,5-dihydro-2-furoate + H(+) = (4,5-dihydro-5-oxofuran-2-yl)-acetate + CO2. Its pathway is aromatic compound metabolism; beta-ketoadipate pathway; 5-oxo-4,5-dihydro-2-furylacetate from 3-carboxy-cis,cis-muconate: step 2/2. This chain is 4-carboxymuconolactone decarboxylase, found in Pseudomonas putida (Arthrobacter siderocapsulatus).